The sequence spans 332 residues: Holliday junction branch migration complex subunit RuvB (332 aa).

Positions 1–181 (MSRILDNEMM…FGITGHMEYY (181 aa)) are large ATPase domain (RuvB-L). ATP contacts are provided by residues L20, R21, G62, K65, T66, T67, 128–130 (EDF), R171, Y181, and R218. T66 contacts Mg(2+). A small ATPAse domain (RuvB-S) region spans residues 182–252 (AHADLTEIVE…ITDKALTMLD (71 aa)). The segment at 255-332 (HEGLDYVDQK…EHLGYEYSEK (78 aa)) is head domain (RuvB-H). Residues R291, R310, R312, and R315 each coordinate DNA.

This sequence belongs to the RuvB family. Homohexamer. Forms an RuvA(8)-RuvB(12)-Holliday junction (HJ) complex. HJ DNA is sandwiched between 2 RuvA tetramers; dsDNA enters through RuvA and exits via RuvB. An RuvB hexamer assembles on each DNA strand where it exits the tetramer. Each RuvB hexamer is contacted by two RuvA subunits (via domain III) on 2 adjacent RuvB subunits; this complex drives branch migration. In the full resolvosome a probable DNA-RuvA(4)-RuvB(12)-RuvC(2) complex forms which resolves the HJ.

It is found in the cytoplasm. It catalyses the reaction ATP + H2O = ADP + phosphate + H(+). Functionally, the RuvA-RuvB-RuvC complex processes Holliday junction (HJ) DNA during genetic recombination and DNA repair, while the RuvA-RuvB complex plays an important role in the rescue of blocked DNA replication forks via replication fork reversal (RFR). RuvA specifically binds to HJ cruciform DNA, conferring on it an open structure. The RuvB hexamer acts as an ATP-dependent pump, pulling dsDNA into and through the RuvAB complex. RuvB forms 2 homohexamers on either side of HJ DNA bound by 1 or 2 RuvA tetramers; 4 subunits per hexamer contact DNA at a time. Coordinated motions by a converter formed by DNA-disengaged RuvB subunits stimulates ATP hydrolysis and nucleotide exchange. Immobilization of the converter enables RuvB to convert the ATP-contained energy into a lever motion, pulling 2 nucleotides of DNA out of the RuvA tetramer per ATP hydrolyzed, thus driving DNA branch migration. The RuvB motors rotate together with the DNA substrate, which together with the progressing nucleotide cycle form the mechanistic basis for DNA recombination by continuous HJ branch migration. Branch migration allows RuvC to scan DNA until it finds its consensus sequence, where it cleaves and resolves cruciform DNA. The polypeptide is Holliday junction branch migration complex subunit RuvB (Streptococcus pneumoniae serotype 19F (strain G54)).